The primary structure comprises 386 residues: MNMPLLDIQPRTLQFAVDLKKQTSCVVQLTNTTHHYVAFKVKTTSPKKYCVRPNVGVVAPKSTCEFTVIMQAFKEPPPDMVCKDKFLIQSTAVSAETTDEDITASMFSKAEGKHIEENKLRVTLVPPSDSPELSPINTPKQGAVFEDSILKDRLYSQSETLAPPQYEGEIVKEPRMVGHDELKAADNAKELKTPKMATVDFVEDRYTANDLKATKDSYDSSRMAKETGFDPIRSHKDADDGRAIKATTNLDAPMKKAMDLPRDQGFTNGIAVDSEPKISKERDVVQLQKTDGQNVRGLDELKLVKDIEEMKLKVDALESKLKQADSTISKLMEERSISSQHRQSLQHELAELRTKKIVKEVHNGFPLLYVCVVAFIAYVIGHFLRT.

Position 1 is an N-acetylmethionine (methionine 1). The Cytoplasmic portion of the chain corresponds to 1–363 (MNMPLLDIQP…TKKIVKEVHN (363 aa)). The region spanning 5-125 (LLDIQPRTLQ…EENKLRVTLV (121 aa)) is the MSP domain. Serine 279 carries the post-translational modification Phosphoserine. Positions 300–353 (ELKLVKDIEEMKLKVDALESKLKQADSTISKLMEERSISSQHRQSLQHELAELR) form a coiled coil. Residues 364–384 (GFPLLYVCVVAFIAYVIGHFL) form a helical; Anchor for type IV membrane protein membrane-spanning segment.

Belongs to the VAMP-associated protein (VAP) (TC 9.B.17) family. As to quaternary structure, interacts with cowpea mosaic virus (CPMV) NTP-binding protein (NTB).

It localises to the endoplasmic reticulum membrane. Its function is as follows. May play a role in vesicle trafficking. In Arabidopsis thaliana (Mouse-ear cress), this protein is Vesicle-associated protein 2-2 (PVA22).